A 601-amino-acid polypeptide reads, in one-letter code: tRNA 5-methylaminomethyl-2-thiouridine biosynthesis bifunctional protein MnmC (601 aa).

The tract at residues 1 to 237 is tRNA (mnm(5)s(2)U34)-methyltransferase; it reads MSDPTASPLI…KKQRLEAVAP (237 aa). Positions 252–601 are FAD-dependent cmnm(5)s(2)U34 oxidoreductase; it reads IGGGIAGAAM…FSSRVATGAV (350 aa).

It in the N-terminal section; belongs to the methyltransferase superfamily. tRNA (mnm(5)s(2)U34)-methyltransferase family. In the C-terminal section; belongs to the DAO family. It depends on FAD as a cofactor.

The protein resides in the cytoplasm. It carries out the reaction 5-aminomethyl-2-thiouridine(34) in tRNA + S-adenosyl-L-methionine = 5-methylaminomethyl-2-thiouridine(34) in tRNA + S-adenosyl-L-homocysteine + H(+). Functionally, catalyzes the last two steps in the biosynthesis of 5-methylaminomethyl-2-thiouridine (mnm(5)s(2)U) at the wobble position (U34) in tRNA. Catalyzes the FAD-dependent demodification of cmnm(5)s(2)U34 to nm(5)s(2)U34, followed by the transfer of a methyl group from S-adenosyl-L-methionine to nm(5)s(2)U34, to form mnm(5)s(2)U34. The sequence is that of tRNA 5-methylaminomethyl-2-thiouridine biosynthesis bifunctional protein MnmC from Caulobacter sp. (strain K31).